Here is an 822-residue protein sequence, read N- to C-terminus: uncharacterized protein (822 aa).

Residues 1 to 230 (MARGKRSTQR…NAAPLNKTDA (230 aa)) are disordered. S27 is modified (phosphoserine). Basic residues predominate over residues 34–44 (SKAKKNKKKLN). Phosphoserine is present on residues S47, S51, and S55. Phosphotyrosine is present on Y57. A compositionally biased stretch (acidic residues) spans 61 to 70 (PEDDEVDEEV). The span at 73-85 (VKKKPSKKSKKAK) shows a compositional bias: basic residues. Residues 92–106 (FADEQSVEEEEEEDS) show a composition bias toward acidic residues. S97 carries the phosphoserine modification. A compositionally biased stretch (basic residues) spans 111–121 (RKNKKSSKKAS). 2 stretches are compositionally biased toward acidic residues: residues 129–144 (LADDMDDLSLDEEESE) and 163–172 (SEALDDGDIE). 2 positions are modified to phosphoserine: S137 and S163. ABC transporter domains follow at residues 276-519 (LQVE…VQLA) and 594-809 (IKFQ…AKER). ATP contacts are provided by residues 308-315 (APNGSGKS) and 627-634 (GPNGAGKT).

The protein belongs to the ABC transporter superfamily.

The protein resides in the cytoplasm. This is an uncharacterized protein from Schizosaccharomyces pombe (strain 972 / ATCC 24843) (Fission yeast).